A 394-amino-acid chain; its full sequence is Argininosuccinate synthase (394 aa).

An ATP-binding site is contributed by 8-16 (AYSGGLDTS). Residues Y86 and S91 each coordinate L-citrulline. Position 116 (G116) interacts with ATP. 3 residues coordinate L-aspartate: T118, N122, and D123. N122 contacts L-citrulline. The L-citrulline site is built by R126, S172, S181, E256, and Y268.

Belongs to the argininosuccinate synthase family. Type 1 subfamily. In terms of assembly, homotetramer.

The protein resides in the cytoplasm. The enzyme catalyses L-citrulline + L-aspartate + ATP = 2-(N(omega)-L-arginino)succinate + AMP + diphosphate + H(+). Its pathway is amino-acid biosynthesis; L-arginine biosynthesis; L-arginine from L-ornithine and carbamoyl phosphate: step 2/3. In Methanococcoides burtonii (strain DSM 6242 / NBRC 107633 / OCM 468 / ACE-M), this protein is Argininosuccinate synthase.